Here is an 87-residue protein sequence, read N- to C-terminus: DNA-directed RNA polymerase subunit omega (87 aa).

This sequence belongs to the RNA polymerase subunit omega family. As to quaternary structure, the RNAP catalytic core consists of 2 alpha, 1 beta, 1 beta' and 1 omega subunit. When a sigma factor is associated with the core the holoenzyme is formed, which can initiate transcription.

It carries out the reaction RNA(n) + a ribonucleoside 5'-triphosphate = RNA(n+1) + diphosphate. In terms of biological role, promotes RNA polymerase assembly. Latches the N- and C-terminal regions of the beta' subunit thereby facilitating its interaction with the beta and alpha subunits. The sequence is that of DNA-directed RNA polymerase subunit omega from Leifsonia xyli subsp. xyli (strain CTCB07).